The primary structure comprises 413 residues: Histidinol-phosphate aminotransferase, chloroplastic (413 aa).

The N-terminal 35 residues, 1 to 35 (MGVIELCNTSSICIGRAKPSCCSIERNQRRRIICM), are a transit peptide targeting the chloroplast. At Lys-273 the chain carries N6-(pyridoxal phosphate)lysine.

Belongs to the class-II pyridoxal-phosphate-dependent aminotransferase family. Histidinol-phosphate aminotransferase subfamily. As to quaternary structure, homodimer. Pyridoxal 5'-phosphate serves as cofactor. As to expression, mainly expressed in green tissues.

It localises to the plastid. The protein resides in the chloroplast. It carries out the reaction L-histidinol phosphate + 2-oxoglutarate = 3-(imidazol-4-yl)-2-oxopropyl phosphate + L-glutamate. The protein operates within amino-acid biosynthesis; L-histidine biosynthesis; L-histidine from 5-phospho-alpha-D-ribose 1-diphosphate: step 7/9. In Nicotiana tabacum (Common tobacco), this protein is Histidinol-phosphate aminotransferase, chloroplastic (HPA).